Consider the following 154-residue polypeptide: Actin-related protein 2/3 complex subunit 5 (154 aa).

The residue at position 142 (T142) is a Phosphothreonine.

This sequence belongs to the ARPC5 family. Component of the Arp2/3 complex composed of ARP2, ARP3, ARC40/p41-ARC, ARC35/p34-ARC, ARC18/p21-ARC, ARC19/p20-ARC and ARC16/p16-ARC.

It is found in the cytoplasm. The protein localises to the cytoskeleton. It localises to the actin patch. Its function is as follows. Functions as a component of the Arp2/3 complex which is involved in regulation of actin polymerization and together with an activating nucleation-promoting factor (NPF) mediates the formation of branched actin networks. This is Actin-related protein 2/3 complex subunit 5 (ARC15) from Saccharomyces cerevisiae (strain ATCC 204508 / S288c) (Baker's yeast).